The chain runs to 131 residues: Small ribosomal subunit protein uS8 (131 aa).

It belongs to the universal ribosomal protein uS8 family. Part of the 30S ribosomal subunit. Contacts proteins S5 and S12.

In terms of biological role, one of the primary rRNA binding proteins, it binds directly to 16S rRNA central domain where it helps coordinate assembly of the platform of the 30S subunit. This Bordetella parapertussis (strain 12822 / ATCC BAA-587 / NCTC 13253) protein is Small ribosomal subunit protein uS8.